The primary structure comprises 250 residues: Exosome complex component Rrp41 (250 aa).

The protein belongs to the RNase PH family. Rrp41 subfamily. In terms of assembly, component of the archaeal exosome complex. Forms a hexameric ring-like arrangement composed of 3 Rrp41-Rrp42 heterodimers. The hexameric ring associates with a trimer of Rrp4 and/or Csl4 subunits.

Its subcellular location is the cytoplasm. Catalytic component of the exosome, which is a complex involved in RNA degradation. Has 3'-&gt;5' exoribonuclease activity. Can also synthesize heteromeric RNA-tails. This is Exosome complex component Rrp41 from Pyrococcus furiosus (strain ATCC 43587 / DSM 3638 / JCM 8422 / Vc1).